A 414-amino-acid chain; its full sequence is Serine/threonine transporter SstT (414 aa).

Helical transmembrane passes span 22–42 (GLVLGIVVALISAPLQETIGF), 54–74 (IFVKALRAVAPILIFFLVMAA), 89–109 (IIVLYLLGTFLAAFVAVIAGF), 148–168 (AIFKANFIGVLAWSIGLGLAL), 189–209 (IVHVIISFAPFGVFGLVAETL), 223–243 (LLAVLIGTMLFTAFVVNPILV), 305–325 (MAGAAITITILTLAAVHTLGL), and 337–357 (IVAALCACGASGVAGGSLLLI).

The protein belongs to the dicarboxylate/amino acid:cation symporter (DAACS) (TC 2.A.23) family.

Its subcellular location is the cell inner membrane. It catalyses the reaction L-serine(in) + Na(+)(in) = L-serine(out) + Na(+)(out). It carries out the reaction L-threonine(in) + Na(+)(in) = L-threonine(out) + Na(+)(out). In terms of biological role, involved in the import of serine and threonine into the cell, with the concomitant import of sodium (symport system). This chain is Serine/threonine transporter SstT, found in Haemophilus influenzae (strain PittEE).